A 327-amino-acid chain; its full sequence is Peroxidase N (327 aa).

The first 28 residues, M1–A28, serve as a signal peptide directing secretion. Q29 is modified (pyrrolidone carboxylic acid). 4 disulfide bridges follow: C39–C116, C72–C77, C122–C323, and C200–C232. The active-site Proton acceptor is the H70. Residues D71, V74, G76, D78, and S80 each coordinate Ca(2+). Residue N155 is glycosylated (N-linked (GlcNAc...) asparagine). P163 is a binding site for substrate. N182 is a glycosylation site (N-linked (GlcNAc...) asparagine). Position 193 (H193) interacts with heme b. T194 is a binding site for Ca(2+). N-linked (GlcNAc...) asparagine glycosylation is found at N209 and N239. Ca(2+) is bound at residue D245. N247 carries an N-linked (GlcNAc...) asparagine glycan. 2 residues coordinate Ca(2+): S248 and D253. A glycan (N-linked (GlcNAc...) asparagine) is linked at N281.

It belongs to the peroxidase family. Classical plant (class III) peroxidase subfamily. Ca(2+) is required as a cofactor. Requires heme b as cofactor.

It is found in the secreted. The enzyme catalyses 2 a phenolic donor + H2O2 = 2 a phenolic radical donor + 2 H2O. Its function is as follows. Removal of H(2)O(2), oxidation of toxic reductants, biosynthesis and degradation of lignin, suberization, auxin catabolism, response to environmental stresses such as wounding, pathogen attack and oxidative stress. These functions might be dependent on each isozyme/isoform in each plant tissue. This is Peroxidase N (HRPN) from Armoracia rusticana (Horseradish).